The chain runs to 364 residues: UDP-3-O-acylglucosamine N-acyltransferase (364 aa).

Residue histidine 257 is the Proton acceptor of the active site.

The protein belongs to the transferase hexapeptide repeat family. LpxD subfamily. As to quaternary structure, homotrimer.

The enzyme catalyses a UDP-3-O-[(3R)-3-hydroxyacyl]-alpha-D-glucosamine + a (3R)-hydroxyacyl-[ACP] = a UDP-2-N,3-O-bis[(3R)-3-hydroxyacyl]-alpha-D-glucosamine + holo-[ACP] + H(+). It functions in the pathway bacterial outer membrane biogenesis; LPS lipid A biosynthesis. Its function is as follows. Catalyzes the N-acylation of UDP-3-O-acylglucosamine using 3-hydroxyacyl-ACP as the acyl donor. Is involved in the biosynthesis of lipid A, a phosphorylated glycolipid that anchors the lipopolysaccharide to the outer membrane of the cell. The polypeptide is UDP-3-O-acylglucosamine N-acyltransferase (Paracoccus denitrificans (strain Pd 1222)).